The sequence spans 226 residues: Phosphoglycolate phosphatase (226 aa).

The active-site Nucleophile is the D5. 2 residues coordinate Mg(2+): D5 and D7. Position 142 (K142) interacts with substrate. 2 residues coordinate Mg(2+): D164 and D168.

The protein belongs to the archaeal SPP-like hydrolase family. Requires Mg(2+) as cofactor.

It carries out the reaction 2-phosphoglycolate + H2O = glycolate + phosphate. Its function is as follows. Catalyzes the dephosphorylation of 2-phosphoglycolate. The chain is Phosphoglycolate phosphatase from Sulfurisphaera tokodaii (strain DSM 16993 / JCM 10545 / NBRC 100140 / 7) (Sulfolobus tokodaii).